The sequence spans 79 residues: Crassicorin-I (79 aa).

An N-terminal signal peptide occupies residues 1 to 19 (MKLFLVSIVLVGMLVLAAA). Positions 20-39 (RPERDIDSFDEQEEKGFVKR) are excised as a propeptide. 3 cysteine pairs are disulfide-bonded: Cys-43–Cys-76, Cys-45–Cys-69, and Cys-59–Cys-77.

The protein belongs to the sea anemone type 3 (BDS) potassium channel toxin family. In terms of tissue distribution, highly expressed by the mesenteries. Moderately expressed by the pharynx. Weakly expressed by the gonad and pedal disk. No expression in tentacle.

It is found in the secreted. The protein resides in the nematocyst. Peptide with both antimicrobial and neurotoxin activities. Cationic AMP with antibacterial activity against both Gram-positive bacteria (B.subtilis, MIC=11.49 ug/mL) and Gram-negative bacteria (E.coli (MIC=12.21 ug/mL) and S.enterica (MIC=11.95 ug/mL)). Shows no significant antimicrobial activity against bacteria S.aureus and P.aeruginosa, as well as the fungus C.albicans. In vivo, induces reversible paralytic activity towards the shrimp P.paucidens. May act by impairing sodium or potassium channels in the prey. The chain is Crassicorin-I from Urticina crassicornis (Mottled anemone).